The sequence spans 256 residues: Transcription factor bHLH131 (256 aa).

Positions 91 to 140 (VAAKKHSDAERRRRLRINSQFATLRTILPNLVKQDKASVLGETVRYFNEL) constitute a bHLH domain.

In terms of assembly, homodimer.

Its subcellular location is the nucleus. This is Transcription factor bHLH131 (BHLH131) from Arabidopsis thaliana (Mouse-ear cress).